The sequence spans 141 residues: Nucleoside diphosphate kinase (141 aa).

Positions 11, 59, 87, 93, 104, and 114 each coordinate ATP. Catalysis depends on His-117, which acts as the Pros-phosphohistidine intermediate.

It belongs to the NDK family. Mg(2+) is required as a cofactor.

The protein localises to the cytoplasm. The enzyme catalyses a 2'-deoxyribonucleoside 5'-diphosphate + ATP = a 2'-deoxyribonucleoside 5'-triphosphate + ADP. The catalysed reaction is a ribonucleoside 5'-diphosphate + ATP = a ribonucleoside 5'-triphosphate + ADP. In terms of biological role, major role in the synthesis of nucleoside triphosphates other than ATP. The ATP gamma phosphate is transferred to the NDP beta phosphate via a ping-pong mechanism, using a phosphorylated active-site intermediate. The sequence is that of Nucleoside diphosphate kinase from Staphylothermus marinus (strain ATCC 43588 / DSM 3639 / JCM 9404 / F1).